The following is a 194-amino-acid chain: Xanthine phosphoribosyltransferase (194 aa).

Residues L20 and N27 each coordinate xanthine. A 5-phospho-alpha-D-ribose 1-diphosphate-binding site is contributed by 128–132; the sequence is ANGEA. K156 is a binding site for xanthine.

It belongs to the purine/pyrimidine phosphoribosyltransferase family. Xpt subfamily. Homodimer.

The protein resides in the cytoplasm. It catalyses the reaction XMP + diphosphate = xanthine + 5-phospho-alpha-D-ribose 1-diphosphate. It participates in purine metabolism; XMP biosynthesis via salvage pathway; XMP from xanthine: step 1/1. Its function is as follows. Converts the preformed base xanthine, a product of nucleic acid breakdown, to xanthosine 5'-monophosphate (XMP), so it can be reused for RNA or DNA synthesis. This chain is Xanthine phosphoribosyltransferase, found in Macrococcus caseolyticus (strain JCSC5402) (Macrococcoides caseolyticum).